The chain runs to 892 residues: Alanine--tRNA ligase (892 aa).

Zn(2+)-binding residues include H596, H600, C700, and H704.

It belongs to the class-II aminoacyl-tRNA synthetase family. Requires Zn(2+) as cofactor.

The protein resides in the cytoplasm. It catalyses the reaction tRNA(Ala) + L-alanine + ATP = L-alanyl-tRNA(Ala) + AMP + diphosphate. In terms of biological role, catalyzes the attachment of alanine to tRNA(Ala) in a two-step reaction: alanine is first activated by ATP to form Ala-AMP and then transferred to the acceptor end of tRNA(Ala). Also edits incorrectly charged Ser-tRNA(Ala) and Gly-tRNA(Ala) via its editing domain. The sequence is that of Alanine--tRNA ligase from Methanococcus maripaludis (strain C7 / ATCC BAA-1331).